The chain runs to 944 residues: Putative ATP-dependent RNA helicase (944 aa).

A Helicase ATP-binding domain is found at 66–235 (TTPRSPIDGI…VPLHNLLMKL (170 aa)). 79-86 (HGVGTGKT) contacts ATP. The DEAH box signature appears at 183 to 186 (DEAH). The Helicase C-terminal domain maps to 451–523 (CLTREVMTVP…QIIGRGIRYQ (73 aa)).

Belongs to the DEAD box helicase family. DEAH subfamily.

It carries out the reaction ATP + H2O = ADP + phosphate + H(+). In Heliothis virescens ascovirus 3e (HvAV-3e), this protein is Putative ATP-dependent RNA helicase.